A 500-amino-acid polypeptide reads, in one-letter code: Lysine--tRNA ligase (500 aa).

Residues glutamate 411 and glutamate 418 each contribute to the Mg(2+) site.

Belongs to the class-II aminoacyl-tRNA synthetase family. In terms of assembly, homodimer. The cofactor is Mg(2+).

The protein resides in the cytoplasm. The enzyme catalyses tRNA(Lys) + L-lysine + ATP = L-lysyl-tRNA(Lys) + AMP + diphosphate. This chain is Lysine--tRNA ligase, found in Actinobacillus pleuropneumoniae serotype 7 (strain AP76).